Reading from the N-terminus, the 364-residue chain is Putative F-box/kelch-repeat protein At1g12170 (364 aa).

One can recognise an F-box domain in the interval 1–50 (MMHVILPWELVEEILYRVPPLSLTRFKIVCKQWNTLFKSKSFVNNHLVRV). 2 Kelch repeats span residues 156–205 (SIYN…LNGN) and 328–364 (CVYI…IPVP).

This Arabidopsis thaliana (Mouse-ear cress) protein is Putative F-box/kelch-repeat protein At1g12170.